Consider the following 495-residue polypeptide: Cyclic GMP-AMP synthase (495 aa).

The tract at residues 1–128 (MAARRGKSTR…AGATELAAPA (128 aa)) is disordered. The interval 1–134 (MAARRGKSTR…AAPARMEAPP (134 aa)) is DNA-binding. N6-acetyllysine is present on K7. S13 carries the phosphoserine modification. 2 stretches are compositionally biased toward basic and acidic residues: residues 52–76 (CRRE…RAED) and 105–116 (RAREARSARELR). The residue at position 56 (K56) is an N6-acetyllysine. The residue at position 57 (S57) is a Phosphoserine. A required for association with the cell membrane region spans residues 57-68 (SGPDPREKPQVR). The required for activation upon DNA viral infection stretch occupies residues 103–134 (SCRAREARSARELRPQAGATELAAPARMEAPP). The Nuclear export signal signature appears at 143–148 (LEKVRL). K145 carries the N6-lactoyllysine modification. The DNA-binding stretch occupies residues 147 to 190 (RLSRHEISEAAEVVNWVVEHLLRRLQGGESEFKGVALLRTGSYY). At E165 the chain carries PolyADP-ribosyl glutamic acid. T186 lines the GTP pocket. A Phosphoserine modification is found at S188. Residue S188 participates in ATP binding. Y190 is subject to Phosphotyrosine. 2 residues coordinate Mg(2+): E200 and D202. D202 is a binding site for 2',3'-cGAMP. K206 participates in a covalent cross-link: Glycyl lysine isopeptide (Lys-Gly) (interchain with G-Cter in SUMO). A Glycyl lysine isopeptide (Lys-Gly) (interchain with G-Cter in ubiquitin) cross-link involves residue K260. E261 carries the post-translational modification 5-glutamyl polyglutamate. The Nuclear localization signal motif lies at 268 to 278 (GVTVERKRRGS). S278 is modified (phosphoserine). D294 provides a ligand contact to GTP. Residue D294 participates in Mg(2+) binding. Residue D294 coordinates 2',3'-cGAMP. The segment at 316–357 (SQWLGAKVKNNLKRQPFYLVPKHAKEGSGFQEETWRLSFSHI) is interaction with collided ribosomes. K322 is covalently cross-linked (Glycyl lysine isopeptide (Lys-Gly) (interchain with G-Cter in SUMO); alternate). K322 participates in a covalent cross-link: Glycyl lysine isopeptide (Lys-Gly) (interchain with G-Cter in ubiquitin); alternate. 2',3'-cGAMP is bound by residues K337 and R351. Residue 351 to 358 (RLSFSHIE) coordinates GTP. ATP is bound at residue E358. Position 359 is an N6-acetyllysine (K359). K359 participates in a covalent cross-link: Glycyl lysine isopeptide (Lys-Gly) (interchain with G-Cter in SUMO); alternate. K359 is covalently cross-linked (Glycyl lysine isopeptide (Lys-Gly) (interchain with G-Cter in ubiquitin); alternate). A DNA-binding region spans residues 359–382 (KDILKNHGQSKTCCEIDGVKCCRK). H365 serves as a coordination point for Zn(2+). Position 369 is an N6-acetyllysine (K369). Residue K369 forms a Glycyl lysine isopeptide (Lys-Gly) (interchain with G-Cter in SUMO) linkage. Zn(2+) contacts are provided by C371, C372, and C379. S-palmitoyl cysteine attachment occurs at residues C379 and C380. Glycyl lysine isopeptide (Lys-Gly) (interchain with G-Cter in ubiquitin) cross-links involve residues K386, K389, K396, and K397. Residue K389 is modified to N6-acetyllysine. K389 contributes to the ATP binding site. At S410 the chain carries Phosphoserine. 410–414 (SYHVK) contributes to the ATP binding site. The S-palmitoyl cysteine moiety is linked to residue C449. K481 is subject to N6-methyllysine.

The protein belongs to the mab-21 family. As to quaternary structure, monomer in the absence of DNA. Homodimer in presence of dsDNA: forms a 2:2 dimer with two enzymes binding to two DNA molecules. Interacts with nucleosomes; interaction is mainly mediated via histones H2A and H2B and inactivates the nucleotidyltransferase activity by blocking DNA-binding and subsequent activation. Interacts with PQBP1 (via WW domain). Interacts with TRIM14; this interaction recruits USP14, leading to deubiquitinate and stabilize CGAS and promote type I interferon production. Interacts with ZCCHC3; promoting sensing of dsDNA by CGAS. Interacts (when not monomethylated) with (poly-ADP-ribosylated) PARP1; interaction takes place in the nucleus and prevents the formation of the PARP1-TIMELESS complex. Interacts (when monomethylated) with SGF29; interaction with SGF29 prevents interaction with PARP1. Interacts with PCBP2; preventing the formation of liquid-like droplets in which CGAS is activated. Interacts with IRGM; promoting CGAS degradation. Mg(2+) is required as a cofactor. Mn(2+) serves as cofactor. The cofactor is Zn(2+). Post-translationally, the N-terminal disordered part (1-134) is phosphorylated by AURKB during the G2-M transition, blocking CGAS liquid phase separation and preventing activation. Phosphorylation at Tyr-190 by BLK promotes cytosolic retention. Localizes into the nucleus following dephosphorylation at Tyr-190. Phosphorylation at Ser-410 activates the nucleotidyltransferase activity. Dephosphorylation at Ser-410 by PPP6C impairs its ability to bind GTP, thereby inactivating it. Phosphorylation at Ser-188 by PRKDC inhibits its cyclic GMP-AMP synthase activity by impairing homodimerization and activation. Phosphorylation at Ser-278 by AKT (AKT1, AKT2 or AKT3) suppresses the nucleotidyltransferase activity. Phosphorylation at Ser-278 by CDK1 during mitosis leads to its inhibition, thereby preventing CGAS activation by self-DNA during mitosis. Dephosphorylated at Ser-278 by protein phosphatase PP1 upon mitotic exit. Ubiquitinated at Lys-389 via 'Lys-48'-linked polyubiquitin chains, leading to its SQSTM1-mediated autophagic degradation. Interaction with TRIM14 promotes recruitment of USP14, leading to deubiquitinate Lys-389 and stabilize CGAS. Ubiquitinated at Lys-359 by RNF185 via 'Lys-27'-linked polyubiquitination, promoting CGAS cyclic GMP-AMP synthase activity. Monoubiquitination at Lys-322 by TRIM56 promotes oligomerization and subsequent activation. Monoubiquitination by TRIM41 promotes CGAS activation. Ubiquitination at Lys-260 via 'Lys-48'-linked polyubiquitination promotes its degradation. Deubiquitination at Lys-260 by USP29 promotes its stabilization. Deubiquitinated by USP27X, promoting its stabilization. Ubiquitinated at Lys-386 via 'Lys-63'-linked polyubiquitin chains by MARCHF8, leading to the inhibition of its DNA binding ability. In cycling cells, nucleosome-bound CGAS is ubiquitinated at Lys-396 and Lys-397 via 'Lys-48'-linked polyubiquitin chains by the ECS(SPSB3) complex, leading to its degradation: ubiquitination and degradation of nuclear CGAS during G1 and G2 phases is required to promote low intranuclear CGAS abundance before the next mitotic cycle. In terms of processing, sumoylated at Lys-206 by TRIM38 in uninfected cells and during the early phase of viral infection, promoting its stability by preventing ubiquitination at Lys-260 and subsequent degradation. Desumoylated by SENP2 during the late phase of viral infection. Sumoylation at Lys-322, Lys-359 and Lys-369 prevents DNA-binding, oligomerization and nucleotidyltransferase activity. Desumoylation at Lys-322, Lys-359 and Lys-369 by SENP7 relieves inhibition and activates CGAS. Post-translationally, polyglutamylated by TTLL6 at Glu-261, leading to impair DNA-binding activity. Deglutamylated by AGBL5/CCP5 and AGBL6/CCP6. Acetylation at Lys-359, Lys-369 and Lys-389 inhibits the cyclic GMP-AMP synthase activity. Deacetylated upon cytosolic DNA challenge such as viral infections. Acetylation by KAT5 increases the cyclic GMP-AMP synthase activity by promoting DNA-binding and subsequent activation. In terms of processing, proteolytically cleaved by apoptotic caspases during apoptosis, leading to its inactivation. The damage of the nucleus and the mitochondria during apoptosis leads to leakage of nuclear and mitochondrial DNA, which activate CGAS: cleavage and inactivation during apoptosis in required to prevent cytokine overproduction. Cleaved by CASP7 and CASP3 during virus-induced apoptosis, thereby inactivating it and preventing cytokine overproduction. Cleaved by CASP1 upon DNA virus infection; the cleavage impairs cGAMP production. Also cleaved by the pyroptotic CASP4 during non-canonical inflammasome activation; does not cut at the same sites than CASP1. Post-translationally, degraded via selective autophagy following interaction with IRGM. IRGM promotes CGAS recruitment to autophagosome membranes, promoting its SQSTM1/p62-dependent autophagic degradation. Poly-ADP-ribosylation at Glu-165 by PARP1 impairs DNA-binding, thereby preventing the cyclic GMP-AMP synthase activity. In terms of processing, palmitoylation at Cys-449 by ZDHHC18 impairs DNA-binding, thereby preventing the cyclic GMP-AMP synthase activity. Palmitoylation at Cys-379 and Cys-380 by ZDHHC9 promotes homodimerization and cyclic GMP-AMP synthase activity. Depalmitoylation at Cys-379 and Cys-380 by LYPLAL1 impairs homodimerization and cyclic GMP-AMP synthase activity. Post-translationally, monomethylated at Lys-481 by SETD7. Monomethylation promotes interaction with SGF29, preventing interaction between PARP1 nad SGF29. Demethylation by RIOX1 promotes interaction with PARP1, followed by PARP1 inactivation. Lactylation by AARS2 prevents ability to undergo liquid-liquid phase separation (LLPS), thereby inhibiting CGAS activation.

The protein resides in the nucleus. Its subcellular location is the chromosome. It is found in the cell membrane. It localises to the cytoplasm. The protein localises to the cytosol. It carries out the reaction GTP + ATP = 2',3'-cGAMP + 2 diphosphate. The enzyme catalyses GTP + ATP = pppGp(2'-5')A + diphosphate. The catalysed reaction is pppGp(2'-5')A = 2',3'-cGAMP + diphosphate. With respect to regulation, the enzyme activity is strongly increased by double-stranded DNA (dsDNA), but not by single-stranded DNA or RNA. DNA-binding induces the formation of liquid-like droplets in which CGAS is activated. Liquid-like droplets also create a selective environment that restricts entry of negative regulators, such as TREX1 or BANF1/BAF, allowing sensing of DNA. A number of mechanisms exist to restrict its activity toward self-DNA. The nucleotidyltransferase activity is inhibited in the nucleus via its association with nucleosomes: interacts with the acidic patch of histones H2A and H2B, thereby blocking DNA-binding and subsequent activation. CGAS is also inactive when associated with mitotic chromatin. Chromatin-bound CGAS cannot be activated by exogenous DNA in mitotic cells: phosphorylation of the N-terminal disordered part by AURKB during the G2-M transition blocks CGAS liquid phase separation and activation. Activity toward self-DNA is inhibited by BANF1/BAF upon acute loss of nuclear membrane integrity: BANF1/BAF acts by outcompeting CGAS for DNA-binding, thereby preventing CGAS activation. DNA-induced activation at micronuclei is also limited by TREX1, which degrades micronuclear DNA upon nuclear envelope rupture, thereby preventing CGAS activation. CGAS can be released from nucleosomes and activated by MRE11 component of the MRN complex, which displaces CGAS from acidic-patch-mediated sequestration. Acetylation at Lys-359, Lys-369 and Lys-389 inhibits the cyclic GMP-AMP synthase activity. Acetylation by KAT5 increases the cyclic GMP-AMP synthase activity by promoting DNA-binding and subsequent activation. Phosphorylation at Ser-278 suppresses the nucleotidyltransferase activity. Phosphorylation at Ser-410 promotes the cyclic GMP-AMP synthase activity. Phosphorylation at Ser-188 inhibits its cyclic GMP-AMP synthase activity. Ubiquitination at Lys-359 via 'Lys-27'-linked polyubiquitination enhances the cyclic GMP-AMP synthase activity. Monoubiquitination at Lys-322 promotes oligomerization and subsequent activation. Sumoylation at Lys-322, Lys-359 and Lys-369 prevents DNA-binding, oligomerization and nucleotidyltransferase activity. The enzyme activity is impaired by the cleavage by CASP1. In addition to DNA, also activated by collided ribosomes upon translation stress: specifically binds collided ribosomes, promoting its activation and triggering type-I interferon production. In terms of biological role, nucleotidyltransferase that catalyzes the formation of cyclic GMP-AMP (2',3'-cGAMP) from ATP and GTP and plays a key role in innate immunity. Catalysis involves both the formation of a 2',5' phosphodiester linkage at the GpA step and the formation of a 3',5' phosphodiester linkage at the ApG step, producing c[G(2',5')pA(3',5')p]. Acts as a key DNA sensor: directly binds double-stranded DNA (dsDNA), inducing the formation of liquid-like droplets in which CGAS is activated, leading to synthesis of 2',3'-cGAMP, a second messenger that binds to and activates STING1, thereby triggering type-I interferon production. Preferentially binds long dsDNA (around 45 bp) and forms ladder-like networks that function cooperatively to stabilize individual cGAS-dsDNA complexes. Acts as a key foreign DNA sensor, the presence of double-stranded DNA (dsDNA) in the cytoplasm being a danger signal that triggers the immune responses. Has antiviral activity by sensing the presence of dsDNA from DNA viruses in the cytoplasm. Also acts as an innate immune sensor of infection by retroviruses by detecting the presence of reverse-transcribed DNA in the cytosol. Detection of retroviral reverse-transcribed DNA in the cytosol may be indirect and be mediated via interaction with PQBP1, which directly binds reverse-transcribed retroviral DNA. Also detects the presence of DNA from bacteria. 2',3'-cGAMP can be transferred from producing cells to neighboring cells through gap junctions, leading to promote STING1 activation and convey immune response to connecting cells. 2',3'-cGAMP can also be transferred between cells by virtue of packaging within viral particles contributing to IFN-induction in newly infected cells in a cGAS-independent but STING1-dependent manner. Also senses the presence of neutrophil extracellular traps (NETs) that are translocated to the cytosol following phagocytosis, leading to synthesis of 2',3'-cGAMP. In addition to foreign DNA, can also be activated by endogenous nuclear or mitochondrial DNA. When self-DNA leaks into the cytosol during cellular stress (such as mitochondrial stress, DNA damage, mitotic arrest or senescence), or is present in form of cytosolic micronuclei, CGAS is activated leading to a state of sterile inflammation. Acts as a regulator of cellular senescence by binding to cytosolic chromatin fragments that are present in senescent cells, leading to trigger type-I interferon production via STING1 and promote cellular senescence. Also involved in the inflammatory response to genome instability and double-stranded DNA breaks: acts by localizing to micronuclei arising from genome instability. Micronuclei, which are frequently found in cancer cells, consist of chromatin surrounded by their own nuclear membrane: following breakdown of the micronuclear envelope, a process associated with chromothripsis, CGAS binds self-DNA exposed to the cytosol, leading to 2',3'-cGAMP synthesis and subsequent activation of STING1 and type-I interferon production. In a healthy cell, CGAS is however kept inactive even in cellular events that directly expose it to self-DNA, such as mitosis, when cGAS associates with chromatin directly after nuclear envelope breakdown or remains in the form of postmitotic persistent nuclear cGAS pools bound to chromatin. Nuclear CGAS is inactivated by chromatin via direct interaction with nucleosomes, which block CGAS from DNA binding and thus prevent CGAS-induced autoimmunity. Also acts as a suppressor of DNA repair in response to DNA damage: inhibits homologous recombination repair by interacting with PARP1, the CGAS-PARP1 interaction leading to impede the formation of the PARP1-TIMELESS complex. In addition to DNA, also sense translation stress: in response to translation stress, translocates to the cytosol and associates with collided ribosomes, promoting its activation and triggering type-I interferon production. This chain is Cyclic GMP-AMP synthase, found in Sus scrofa (Pig).